A 254-amino-acid chain; its full sequence is Acidic endochitinase (254 aa).

An N-terminal signal peptide occupies residues 1-23; sequence MKFWGSVLALSFVVFLFLTGTLA. Glu91 serves as the catalytic Proton donor. An intrachain disulfide couples Cys213 to Cys245.

It belongs to the glycosyl hydrolase 19 family. Chitinase class II subfamily.

It is found in the secreted. The catalysed reaction is Random endo-hydrolysis of N-acetyl-beta-D-glucosaminide (1-&gt;4)-beta-linkages in chitin and chitodextrins.. Functionally, defense against chitin-containing fungal pathogens. The protein is Acidic endochitinase of Petunia hybrida (Petunia).